The chain runs to 139 residues: Holo-[acyl-carrier-protein] synthase (139 aa).

2 residues coordinate Mg(2+): aspartate 8 and glutamate 57.

It belongs to the P-Pant transferase superfamily. AcpS family. Mg(2+) is required as a cofactor.

Its subcellular location is the cytoplasm. It catalyses the reaction apo-[ACP] + CoA = holo-[ACP] + adenosine 3',5'-bisphosphate + H(+). Transfers the 4'-phosphopantetheine moiety from coenzyme A to a Ser of acyl-carrier-protein. The polypeptide is Holo-[acyl-carrier-protein] synthase (Rhizobium meliloti (strain 1021) (Ensifer meliloti)).